The primary structure comprises 494 residues: UPF0164 protein TP_0859/TP_0860 (494 aa).

Residues 1–44 (MVRRPCVSAAPVRVGGRLVFGFARVGSRGLCLGALLLSPRIVLA) form the signal peptide.

This sequence belongs to the UPF0164 family.

This is UPF0164 protein TP_0859/TP_0860 from Treponema pallidum (strain Nichols).